The chain runs to 578 residues: L-2,3-diaminopropanoate--citrate ligase (578 aa).

The protein belongs to the IucA/IucC family. Forms a mixture of monomer and dimer in solution.

It catalyses the reaction (S)-2,3-diaminopropanoate + citrate + ATP = 2-[(L-alanin-3-ylcarbamoyl)methyl]-2-hydroxybutanedioate + AMP + diphosphate. It participates in siderophore biosynthesis. Functionally, catalyzes the synthesis of citryl-L-2,3-diaminopropionic acid from L-2,3-diaminopropionic acid (L-Dap) and citrate, the first step in staphyloferrin B biosynthesis. The polypeptide is L-2,3-diaminopropanoate--citrate ligase (Staphylococcus aureus (strain NCTC 8325 / PS 47)).